The sequence spans 133 residues: UPF0225 protein BPP1723 (133 aa).

This sequence belongs to the UPF0225 family.

The chain is UPF0225 protein BPP1723 from Bordetella parapertussis (strain 12822 / ATCC BAA-587 / NCTC 13253).